A 622-amino-acid polypeptide reads, in one-letter code: Elongation factor 4 (622 aa).

The region spanning 17-201 (ALIRNFCIIA…KVVAEVPAPV (185 aa)) is the tr-type G domain. GTP contacts are provided by residues 29–34 (DHGKST) and 148–151 (NKID).

It belongs to the TRAFAC class translation factor GTPase superfamily. Classic translation factor GTPase family. LepA subfamily.

The protein localises to the cell membrane. It catalyses the reaction GTP + H2O = GDP + phosphate + H(+). Required for accurate and efficient protein synthesis under certain stress conditions. May act as a fidelity factor of the translation reaction, by catalyzing a one-codon backward translocation of tRNAs on improperly translocated ribosomes. Back-translocation proceeds from a post-translocation (POST) complex to a pre-translocation (PRE) complex, thus giving elongation factor G a second chance to translocate the tRNAs correctly. Binds to ribosomes in a GTP-dependent manner. The chain is Elongation factor 4 from Streptomyces avermitilis (strain ATCC 31267 / DSM 46492 / JCM 5070 / NBRC 14893 / NCIMB 12804 / NRRL 8165 / MA-4680).